Reading from the N-terminus, the 100-residue chain is Small ribosomal subunit protein uS14c (100 aa).

It belongs to the universal ribosomal protein uS14 family. As to quaternary structure, part of the 30S ribosomal subunit.

The protein resides in the plastid. The protein localises to the chloroplast. In terms of biological role, binds 16S rRNA, required for the assembly of 30S particles. This is Small ribosomal subunit protein uS14c from Ostreococcus tauri.